We begin with the raw amino-acid sequence, 426 residues long: Serine--tRNA ligase (426 aa).

An L-serine-binding site is contributed by 233–235 (TAE). 264–266 (RSE) serves as a coordination point for ATP. Position 287 (Glu287) interacts with L-serine. Residue 351–354 (EISS) participates in ATP binding. Ser387 lines the L-serine pocket.

The protein belongs to the class-II aminoacyl-tRNA synthetase family. Type-1 seryl-tRNA synthetase subfamily. In terms of assembly, homodimer. The tRNA molecule binds across the dimer.

The protein localises to the cytoplasm. It carries out the reaction tRNA(Ser) + L-serine + ATP = L-seryl-tRNA(Ser) + AMP + diphosphate + H(+). The catalysed reaction is tRNA(Sec) + L-serine + ATP = L-seryl-tRNA(Sec) + AMP + diphosphate + H(+). Its pathway is aminoacyl-tRNA biosynthesis; selenocysteinyl-tRNA(Sec) biosynthesis; L-seryl-tRNA(Sec) from L-serine and tRNA(Sec): step 1/1. Functionally, catalyzes the attachment of serine to tRNA(Ser). Is also able to aminoacylate tRNA(Sec) with serine, to form the misacylated tRNA L-seryl-tRNA(Sec), which will be further converted into selenocysteinyl-tRNA(Sec). In Ectopseudomonas mendocina (strain ymp) (Pseudomonas mendocina), this protein is Serine--tRNA ligase.